The sequence spans 247 residues: tRNA pseudouridine synthase A (247 aa).

Catalysis depends on Asp52, which acts as the Nucleophile. Tyr113 contributes to the substrate binding site.

It belongs to the tRNA pseudouridine synthase TruA family. As to quaternary structure, homodimer.

It catalyses the reaction uridine(38/39/40) in tRNA = pseudouridine(38/39/40) in tRNA. Its function is as follows. Formation of pseudouridine at positions 38, 39 and 40 in the anticodon stem and loop of transfer RNAs. In Bartonella henselae (strain ATCC 49882 / DSM 28221 / CCUG 30454 / Houston 1) (Rochalimaea henselae), this protein is tRNA pseudouridine synthase A.